Consider the following 634-residue polypeptide: Sodium-dependent neutral amino acid transporter B(0)AT1 (634 aa).

At 1 to 41 (MVRLVLPNPGLDTRILSLAELETIEQEEASSRPKWDNKAQY) the chain is on the cytoplasmic side. Residue Ser17 is modified to Phosphoserine. Residues 42 to 62 (LLTCVGFCVGLGNVWRFPYLC) form a helical membrane-spanning segment. Residues 63-65 (QSH) lie on the Extracellular side of the membrane. Residues 66 to 86 (GGGAFMIPFLILLVLEGIPLL) form a helical membrane-spanning segment. At 87–120 (HLEFAIGQRLRRGSLGVWSSIHPALKGVGLTSML) the chain is on the cytoplasmic side. A helical membrane pass occupies residues 121–141 (VSFVVGLYYNTIISWIMWYLF). Over 142-192 (NSFQEPLPWSECPLNENQTGYVDECARSSPVDYFWYRETLNISTSISDSGS) the chain is Extracellular. 2 N-linked (GlcNAc...) asparagine glycosylation sites follow: Asn158 and Asn182. The helical transmembrane segment at 193-213 (IQWRMLLCLACAWSVLYMCTI) threads the bilayer. Topologically, residues 214–221 (RGIETTGK) are cytoplasmic. A helical transmembrane segment spans residues 222 to 242 (VVYITSTLPYVVLTIFLIRGL). Residues 243-268 (TLKGATKGIIYLFTPNVTELANPVTW) are Extracellular-facing. An N-linked (GlcNAc...) asparagine glycan is attached at Asn258. The helical transmembrane segment at 269–289 (LDAGAQVFFSFSLAFGGLISF) threads the bilayer. Over 290-304 (SSYNSVHNNCERDSV) the chain is Cytoplasmic. The helical transmembrane segment at 305–325 (IVSIINGFTSVYVAIVIYSII) threads the bilayer. The Extracellular segment spans residues 326 to 413 (GFRATQRYDD…TEAITKMPVS (88 aa)). Residues Asn354 and Asn368 are each glycosylated (N-linked (GlcNAc...) asparagine). The helical transmembrane segment at 414–434 (PLWSVLFFIMLFCLGLSSMFG) threads the bilayer. Over 435–456 (NMEGVVVPLQDLKVIPPKWPKE) the chain is Cytoplasmic. The chain crosses the membrane as a helical span at residues 457–477 (LLTGLICLGTFLIGFIFTLNS). Residues 478–487 (GQYWLSLLDS) are Extracellular-facing. Residues 488 to 508 (YAVSIPLLIIAFCEMFSVVYV) form a helical membrane-spanning segment. Residues 509–531 (YGVDRFNKDIEFMIGHKPNIFWQ) are Cytoplasmic-facing. Residues 532–552 (VTWRVVSPLLMLIILVFFFVV) traverse the membrane as a helical segment. Residues 553–581 (QVSQELTYSIWNPGYEEFPKSQKISHPNW) are Extracellular-facing. The chain crosses the membrane as a helical span at residues 582–602 (VYAVVVIVAGVPSLTIPSYAI). Topologically, residues 603–634 (YKLIRNCCQKPGDRQGLVSTLSTASMNGDLKY) are cytoplasmic. Ser627 carries the phosphoserine modification.

The protein belongs to the sodium:neurotransmitter symporter (SNF) (TC 2.A.22) family. SLC6A19 subfamily. As to quaternary structure, interacts in a tissue-specific manner with ACE2 in small intestine and with CLTRN in the kidney. Interacts with CLTRN; this interaction is required for trafficking of SLC6A19 to the plasma membrane and for its catalytic activation in kidneys. Interacts with ACE2; this interaction is required for trafficking of SLC6A19 to the plasma membrane and for its catalytic activation in intestine. Interacts with ANPEP; the interaction positively regulates its amino acid transporter activity.

It localises to the membrane. It carries out the reaction L-alanine(in) + Na(+)(in) = L-alanine(out) + Na(+)(out). The enzyme catalyses L-cysteine(in) + Na(+)(in) = L-cysteine(out) + Na(+)(out). It catalyses the reaction L-glutamine(in) + Na(+)(in) = L-glutamine(out) + Na(+)(out). The catalysed reaction is glycine(in) + Na(+)(in) = glycine(out) + Na(+)(out). It carries out the reaction L-isoleucine(in) + Na(+)(in) = L-isoleucine(out) + Na(+)(out). The enzyme catalyses L-leucine(in) + Na(+)(in) = L-leucine(out) + Na(+)(out). It catalyses the reaction L-methionine(in) + Na(+)(in) = L-methionine(out) + Na(+)(out). The catalysed reaction is L-phenylalanine(in) + Na(+)(in) = L-phenylalanine(out) + Na(+)(out). It carries out the reaction L-serine(in) + Na(+)(in) = L-serine(out) + Na(+)(out). The enzyme catalyses L-tryptophan(in) + Na(+)(in) = L-tryptophan(out) + Na(+)(out). It catalyses the reaction L-tyrosine(in) + Na(+)(in) = L-tyrosine(out) + Na(+)(out). The catalysed reaction is L-valine(in) + Na(+)(in) = L-valine(out) + Na(+)(out). Transporter that mediates resorption of neutral amino acids across the apical membrane of renal and intestinal epithelial cells. This uptake is sodium-dependent and chloride-independent. Requires CLTRN in kidney or ACE2 in intestine for cell surface expression and amino acid transporter activity. The chain is Sodium-dependent neutral amino acid transporter B(0)AT1 (SLC6A19) from Pongo abelii (Sumatran orangutan).